A 394-amino-acid chain; its full sequence is Flavohemoprotein (394 aa).

The Globin domain occupies 1–136 (MISQQTIDIV…LANVFITREE (136 aa)). Residue His85 coordinates heme b. Active-site charge relay system residues include Tyr95 and Glu135. The segment at 147-394 (GGWRGTREFT…YECFGPHKVL (248 aa)) is reductase. The FAD-binding FR-type domain maps to 150-255 (RGTREFTLIE…AAPAGDFFLD (106 aa)). FAD-binding positions include Tyr188 and 204-207 (RQYS). 268-273 (GVGLTP) contributes to the NADP(+) binding site. Residue 387–390 (CFGP) participates in FAD binding.

The protein belongs to the globin family. Two-domain flavohemoproteins subfamily. It in the C-terminal section; belongs to the flavoprotein pyridine nucleotide cytochrome reductase family. The cofactor is heme b. Requires FAD as cofactor.

It catalyses the reaction 2 nitric oxide + NADPH + 2 O2 = 2 nitrate + NADP(+) + H(+). The catalysed reaction is 2 nitric oxide + NADH + 2 O2 = 2 nitrate + NAD(+) + H(+). Functionally, is involved in NO detoxification in an aerobic process, termed nitric oxide dioxygenase (NOD) reaction that utilizes O(2) and NAD(P)H to convert NO to nitrate, which protects the bacterium from various noxious nitrogen compounds. Therefore, plays a central role in the inducible response to nitrosative stress. The protein is Flavohemoprotein of Photobacterium profundum (strain SS9).